Here is a 91-residue protein sequence, read N- to C-terminus: Uteroglobin (91 aa).

The signal sequence occupies residues 1-21 (MKLAVTLTLVTLALCCSSASA).

Belongs to the secretoglobin family. In terms of assembly, antiparallel homodimer; disulfide-linked. Interaction with LMBR1L has been observed in PubMed:16423471, but not in PubMed:23964685. In terms of tissue distribution, club cells (nonciliated cells of the surface epithelium of the pulmonary airways).

It localises to the secreted. In terms of biological role, binds phosphatidylcholine, phosphatidylinositol, polychlorinated biphenyls (PCB) and weakly progesterone, potent inhibitor of phospholipase A2. In Homo sapiens (Human), this protein is Uteroglobin (SCGB1A1).